The following is a 563-amino-acid chain: NAD(P)H-quinone oxidoreductase chain 4 (563 aa).

15 helical membrane passes run Phe-25 to Ile-45, Trp-56 to Gly-76, Val-90 to Pro-110, Leu-111 to Phe-131, Pro-133 to Val-153, Leu-157 to Trp-177, Phe-189 to Phe-209, Gly-230 to Val-250, Thr-264 to Met-284, Phe-298 to Phe-318, Met-335 to Leu-355, Gln-356 to Asp-376, Phe-397 to Val-417, Ile-438 to Met-458, and Val-485 to Met-505.

It belongs to the complex I subunit 4 family.

Its subcellular location is the cellular thylakoid membrane. The catalysed reaction is a plastoquinone + NADH + (n+1) H(+)(in) = a plastoquinol + NAD(+) + n H(+)(out). It catalyses the reaction a plastoquinone + NADPH + (n+1) H(+)(in) = a plastoquinol + NADP(+) + n H(+)(out). Its function is as follows. NDH-1 shuttles electrons from NAD(P)H, via FMN and iron-sulfur (Fe-S) centers, to quinones in the respiratory chain. The immediate electron acceptor for the enzyme in this species is believed to be plastoquinone. Couples the redox reaction to proton translocation (for every two electrons transferred, four hydrogen ions are translocated across the cytoplasmic membrane), and thus conserves the redox energy in a proton gradient. The chain is NAD(P)H-quinone oxidoreductase chain 4 from Prochlorococcus marinus (strain MIT 9313).